The primary structure comprises 289 residues: Probable aquaporin PIP-type 7a (289 aa).

The segment at 1-39 (MEAKEQDVSLGANKFPERQPLGIAAQSQDEPKDYQEPPP) is disordered. The Cytoplasmic portion of the chain corresponds to 1-57 (MEAKEQDVSLGANKFPERQPLGIAAQSQDEPKDYQEPPPAPLFEPSELTSWSFYRAG). The helical transmembrane segment at 58–78 (IAEFIATFLFLYITVLTVMGV) threads the bilayer. Residues 79–91 (VRESSKCKTVGIQ) lie on the Extracellular side of the membrane. A helical transmembrane segment spans residues 92-112 (GIAWAFGGMIFALVYCTAGIS). Residues 113–135 (GGHINPAVTFGLFLARKLSLTRA) lie on the Cytoplasmic side of the membrane. The NPA 1 motif lies at 117–119 (NPA). Residues 136 to 156 (IFYMVMQVLGAICGAGVVKGF) form a helical membrane-spanning segment. Over 157–178 (EGKQRFGDLNGGANFVAPGYTK) the chain is Extracellular. A helical transmembrane segment spans residues 179 to 199 (GDGLGAEIVGTFILVYTVFSA). Residues 200–212 (TDAKRSARDSHVP) are Cytoplasmic-facing. A helical membrane pass occupies residues 213-233 (ILAPLPIGFAVFLVHLATIPI). Residues 234–260 (TGTGINPARSLGAAIVFNKKIGWNDHW) are Extracellular-facing. The short motif at 239-241 (NPA) is the NPA 2 element. A helical transmembrane segment spans residues 261–281 (IFWVGPFIGAALAALYHQVVI). Over 282–289 (RAIPFKSK) the chain is Cytoplasmic.

It belongs to the MIP/aquaporin (TC 1.A.8) family. PIP (TC 1.A.8.11) subfamily.

It localises to the cell membrane. Aquaporins facilitate the transport of water and small neutral solutes across cell membranes. In Pisum sativum (Garden pea), this protein is Probable aquaporin PIP-type 7a (TRG-31).